Reading from the N-terminus, the 673-residue chain is Methionine--tRNA ligase (673 aa).

A 'HIGH' region motif is present at residues 13–23 (PYTNGFCHLGH). C144, C147, C156, and C160 together coordinate Zn(2+). Positions 325-329 (KFSKS) match the 'KMSKS' region motif. K328 serves as a coordination point for ATP. Positions 575–673 (DVAKLDLRVG…KDVPEGTKVH (99 aa)) constitute a tRNA-binding domain.

It belongs to the class-I aminoacyl-tRNA synthetase family. MetG type 1 subfamily. As to quaternary structure, homodimer. The cofactor is Zn(2+).

The protein resides in the cytoplasm. It catalyses the reaction tRNA(Met) + L-methionine + ATP = L-methionyl-tRNA(Met) + AMP + diphosphate. Is required not only for elongation of protein synthesis but also for the initiation of all mRNA translation through initiator tRNA(fMet) aminoacylation. The protein is Methionine--tRNA ligase of Methanocorpusculum labreanum (strain ATCC 43576 / DSM 4855 / Z).